The sequence spans 137 residues: MSFSGVKVSPECLEAFQELKLGKSLRYVVFKMNDTKTEIVVEKKSTDKDFDTFLGDLPEKDCRYAIYDFEFNLGEGVRNKIIFISWSPDVAPIKSKMVYSSSKDTLRRAFTGIGTDIQATDFSEVAYETVLEKVTRK.

The 131-residue stretch at 5–135 folds into the ADF-H domain; that stretch reads GVKVSPECLE…AYETVLEKVT (131 aa).

This sequence belongs to the actin-binding proteins ADF family.

Its subcellular location is the cytoplasm. It localises to the cytoskeleton. The protein resides in the nucleus matrix. Functionally, controls reversibly actin polymerization and depolymerization in a pH-sensitive manner. It has the ability to bind G- and F-actin in a 1:1 ratio of cofilin to actin. Binding to F-actin is regulated by tropomyosin. It is the major component of intranuclear and cytoplasmic actin rods. Required for accumulation of actin at the cell division site via depolymerizing actin at the cell ends. In association with myosin II has a role in the assembly of the contractile ring via severing actin filaments. Involved in the maintenance of the contractile ring once formed. In association with profilin and capping protein, has a role in the mitotic reorganization of the actin cytoskeleton. Severs actin filaments (F-actin). This Schizosaccharomyces pombe (strain 972 / ATCC 24843) (Fission yeast) protein is Cofilin (cof1).